The primary structure comprises 256 residues: Calsenilin (256 aa).

Residues 1-22 form a disordered region; it reads MQRTKEAVKASDGNLLGDPGRI. A Glycyl lysine isopeptide (Lys-Gly) (interchain with G-Cter in SUMO1) cross-link involves residue Lys26. Residues Cys45 and Cys46 are each lipidated (S-palmitoyl cysteine). Residues Ser60 and Ser63 each carry the phosphoserine modification. The EF-hand 1; degenerate domain occupies 67–123; sequence LELSTVRHQPEGLDQLQAQTKFTKKELQSLYRGFKNECPTGLVDEDTFKLIYSQFFP. Lys90 is covalently cross-linked (Glycyl lysine isopeptide (Lys-Gly) (interchain with G-Cter in SUMO1)). 3 EF-hand domains span residues 126–161, 162–197, and 210–245; these read DATT…LLRG, TVHE…IYDM, and APLE…DENI. Asp175, Asn177, Asp179, Cys181, Glu186, Asp223, Asn225, Asp227, and Glu234 together coordinate Ca(2+). The interval 243 to 256 is interaction with KCND2; that stretch reads ENIMNSMQLFENVI.

Belongs to the recoverin family. As to quaternary structure, binds to DNA as a homomultimer. Dimerization is induced by binding to calcium. Interacts with the C-terminus of PSEN1 and PSEN2 and with PSEN2 CTF subunit. Associates with KCN1. Component of heteromultimeric potassium channels. Identified in potassium channel complexes containing KCND1, KCND2, KCND3, KCNIP1, KCNIP2, KCNIP3, KCNIP4, DPP6 and DPP10. Interacts with KCND2 and KCND3. Palmitoylated. Palmitoylation enhances association with the plasma membrane. Post-translationally, proteolytically cleaved by caspase-3. Highly expressed in brain. Isoform 1 or isoform 4 (T+ forms) are expressed at equal levels with isoform 2 or isoform 3 (T- forms). Primarily detected in the layer V and deep layer VI of the cerebral cortex, the hippocampus, and the entire cerebellum. Expressed at low levels in testis. Also expressed in heart.

It localises to the cytoplasm. The protein resides in the cell membrane. Its subcellular location is the endoplasmic reticulum. The protein localises to the golgi apparatus. It is found in the nucleus. Its function is as follows. Calcium-dependent transcriptional repressor that binds to the DRE element of genes including PDYN and FOS. Affinity for DNA is reduced upon binding to calcium and enhanced by binding to magnesium. Seems to be involved in nociception. Regulatory subunit of Kv4/D (Shal)-type voltage-gated rapidly inactivating A-type potassium channels, such as KCND2/Kv4.2 and KCND3/Kv4.3. Modulates channel expression at the cell membrane, gating characteristics, inactivation kinetics and rate of recovery from inactivation in a calcium-dependent and isoform-specific manner. Functionally, may play a role in the regulation of PSEN2 proteolytic processing and apoptosis. Together with PSEN2 involved in modulation of amyloid-beta formation. This Mus musculus (Mouse) protein is Calsenilin (Kcnip3).